Consider the following 460-residue polypeptide: Elongation factor 1-alpha-A (460 aa).

Position 2 is a n,N,N-trimethylglycine (G2). K3 is subject to N6,N6-dimethyllysine; alternate. K3 carries the post-translational modification N6-methyllysine; alternate. Residues 5-240 (KGHINVVVIG…DSIEPPARPT (236 aa)) enclose the tr-type G domain. The segment at 14–21 (GHVDSGKS) is G1. 14–21 (GHVDSGKS) provides a ligand contact to GTP. K30 carries the post-translational modification N6-methyllysine. The tract at residues 70–74 (GITID) is G2. N6,N6,N6-trimethyllysine is present on K79. Positions 91-94 (DAPG) are G3. GTP is bound by residues 91–95 (DAPGH) and 153–156 (NKMD). Residues 153–156 (NKMD) form a G4 region. The G5 stretch occupies residues 192–194 (SGF). K316 is subject to N6,N6-dimethyllysine; alternate. K316 carries the post-translational modification N6-methyllysine; alternate. Position 390 is an N6-methyllysine (K390).

This sequence belongs to the TRAFAC class translation factor GTPase superfamily. Classic translation factor GTPase family. EF-Tu/EF-1A subfamily.

It is found in the cytoplasm. Its function is as follows. This protein promotes the GTP-dependent binding of aminoacyl-tRNA to the A-site of ribosomes during protein biosynthesis. The sequence is that of Elongation factor 1-alpha-A (tef101) from Schizosaccharomyces pombe (strain 972 / ATCC 24843) (Fission yeast).